The chain runs to 263 residues: (E)-2-((N-methylformamido)methylene)succinate hydrolase (263 aa).

Serine 96 serves as the catalytic Nucleophile. Catalysis depends on residues asparagine 120 and histidine 241.

The protein belongs to the AB hydrolase superfamily. In terms of assembly, monomer.

It catalyses the reaction (E)-2-((N-methylformamido) methylene)succinate + 2 H2O + H(+) = succinate semialdehyde + methylamine + formate + CO2. In terms of biological role, involved in the degradation of the pyridine ring of trigonelline (TG; N-methylnicotinate) into succinate and methylamine as carbon and nitrogen sources, respectively. Catalyzes the hydrolysis of (E)-2-((N-methylformamido)methylene)succinate (MFMS) into formic acid, succinate semialdehyde (SSA), methylamine and carbon dioxide. This Acinetobacter baylyi (strain ATCC 33305 / BD413 / ADP1) protein is (E)-2-((N-methylformamido)methylene)succinate hydrolase.